The sequence spans 86 residues: Small ribosomal subunit protein bS16 (86 aa).

This sequence belongs to the bacterial ribosomal protein bS16 family.

This Xylella fastidiosa (strain M23) protein is Small ribosomal subunit protein bS16.